A 255-amino-acid chain; its full sequence is 5-oxoprolinase subunit A (255 aa).

The protein belongs to the LamB/PxpA family. Forms a complex composed of PxpA, PxpB and PxpC.

The catalysed reaction is 5-oxo-L-proline + ATP + 2 H2O = L-glutamate + ADP + phosphate + H(+). Catalyzes the cleavage of 5-oxoproline to form L-glutamate coupled to the hydrolysis of ATP to ADP and inorganic phosphate. This is 5-oxoprolinase subunit A from Campylobacter jejuni subsp. jejuni serotype O:6 (strain 81116 / NCTC 11828).